Consider the following 271-residue polypeptide: 3-methyl-2-oxobutanoate hydroxymethyltransferase (271 aa).

Positions 42 and 86 each coordinate Mg(2+). Residues 42-43, Asp86, and Lys116 contribute to the 3-methyl-2-oxobutanoate site; that span reads DS. Glu118 is a binding site for Mg(2+). Glu185 acts as the Proton acceptor in catalysis.

This sequence belongs to the PanB family. In terms of assembly, homodecamer; pentamer of dimers. The cofactor is Mg(2+).

The protein resides in the cytoplasm. The catalysed reaction is 3-methyl-2-oxobutanoate + (6R)-5,10-methylene-5,6,7,8-tetrahydrofolate + H2O = 2-dehydropantoate + (6S)-5,6,7,8-tetrahydrofolate. It participates in cofactor biosynthesis; (R)-pantothenate biosynthesis; (R)-pantoate from 3-methyl-2-oxobutanoate: step 1/2. Its function is as follows. Catalyzes the reversible reaction in which hydroxymethyl group from 5,10-methylenetetrahydrofolate is transferred onto alpha-ketoisovalerate to form ketopantoate. The polypeptide is 3-methyl-2-oxobutanoate hydroxymethyltransferase (Synechococcus sp. (strain CC9605)).